The primary structure comprises 178 residues: MAGHSDNDLGLPSFDKPVKVAIVIAPYYTSISEAQLAAARGVLDAADVAHETIEVPGSLEVPTAIGIAHRMSNFDGFVALGCVIRGATSHYDVVVNESSRALTMLGLQGICIGNGIITVETRDQAEERADGGRLNTAGGAAEAALHLIALTRSYGAPKGALGFKPRGTIEIADGSSQA.

Residues Tyr27, 58–60, and 82–84 contribute to the 5-amino-6-(D-ribitylamino)uracil site; these read SLE and CVI. 87-88 is a binding site for (2S)-2-hydroxy-3-oxobutyl phosphate; it reads AT. Residue His90 is the Proton donor of the active site. Asn114 is a binding site for 5-amino-6-(D-ribitylamino)uracil. (2S)-2-hydroxy-3-oxobutyl phosphate is bound at residue Arg128.

This sequence belongs to the DMRL synthase family.

The catalysed reaction is (2S)-2-hydroxy-3-oxobutyl phosphate + 5-amino-6-(D-ribitylamino)uracil = 6,7-dimethyl-8-(1-D-ribityl)lumazine + phosphate + 2 H2O + H(+). The protein operates within cofactor biosynthesis; riboflavin biosynthesis; riboflavin from 2-hydroxy-3-oxobutyl phosphate and 5-amino-6-(D-ribitylamino)uracil: step 1/2. In terms of biological role, catalyzes the formation of 6,7-dimethyl-8-ribityllumazine by condensation of 5-amino-6-(D-ribitylamino)uracil with 3,4-dihydroxy-2-butanone 4-phosphate. This is the penultimate step in the biosynthesis of riboflavin. The sequence is that of 6,7-dimethyl-8-ribityllumazine synthase from Jannaschia sp. (strain CCS1).